Consider the following 65-residue polypeptide: Large ribosomal subunit protein bL35 (65 aa).

It belongs to the bacterial ribosomal protein bL35 family.

The polypeptide is Large ribosomal subunit protein bL35 (Chromobacterium violaceum (strain ATCC 12472 / DSM 30191 / JCM 1249 / CCUG 213 / NBRC 12614 / NCIMB 9131 / NCTC 9757 / MK)).